The primary structure comprises 285 residues: Pantothenate synthetase (285 aa).

30–37 contributes to the ATP binding site; the sequence is MGYLHEGH. Histidine 37 acts as the Proton donor in catalysis. Residue glutamine 61 coordinates (R)-pantoate. Position 61 (glutamine 61) interacts with beta-alanine. 148–151 contributes to the ATP binding site; the sequence is GKKD. Glutamine 154 contacts (R)-pantoate. Residues isoleucine 177 and 185-188 contribute to the ATP site; that span reads LSSR.

It belongs to the pantothenate synthetase family. Homodimer.

The protein resides in the cytoplasm. The enzyme catalyses (R)-pantoate + beta-alanine + ATP = (R)-pantothenate + AMP + diphosphate + H(+). Its pathway is cofactor biosynthesis; (R)-pantothenate biosynthesis; (R)-pantothenate from (R)-pantoate and beta-alanine: step 1/1. Catalyzes the condensation of pantoate with beta-alanine in an ATP-dependent reaction via a pantoyl-adenylate intermediate. The chain is Pantothenate synthetase from Leptospira borgpetersenii serovar Hardjo-bovis (strain JB197).